Consider the following 394-residue polypeptide: NAC domain-containing protein 3 (394 aa).

One can recognise an NAC domain in the interval Thr3–Asn147. Residues Ile104–Lys153 mediate DNA binding. 2 disordered regions span residues Glu152–Ser173 and Asn264–Phe300. The span at Ser155–Gly165 shows a compositional bias: low complexity. Residues Pro286–Phe300 are compositionally biased toward polar residues.

Its subcellular location is the nucleus. The protein is NAC domain-containing protein 3 (NAC003) of Arabidopsis thaliana (Mouse-ear cress).